The following is a 793-amino-acid chain: Serine/threonine-protein phosphatase 1 regulatory subunit GAC1 (793 aa).

A compositionally biased stretch (polar residues) spans 1–10 (MVIQTATTLS). The tract at residues 1–20 (MVIQTATTLSPAKARPSFPH) is disordered. The CBM21 domain occupies 235 to 360 (TKYLNGQNVK…NNNGKNYHLF (126 aa)). A phosphoserine mark is found at serine 415 and serine 424. Disordered regions lie at residues 450 to 491 (LENA…SIDL) and 616 to 671 (TTMD…LNDH). The span at 623 to 633 (KTSTINNSTDT) shows a compositional bias: polar residues. Over residues 637-648 (PSKENGTVKENK) the composition is skewed to basic and acidic residues. The span at 649–665 (SSANSTSAPSSSQNRAS) shows a compositional bias: low complexity.

Functionally, regulates the activity of glycogen synthase. It is most probably a regulatory subunit for protein phosphatase type 1. The protein is Serine/threonine-protein phosphatase 1 regulatory subunit GAC1 (GAC1) of Saccharomyces cerevisiae (strain ATCC 204508 / S288c) (Baker's yeast).